Reading from the N-terminus, the 236-residue chain is Dolichol-phosphate mannosyltransferase (236 aa).

Residues proline 9, tyrosine 11, glutamate 13, isoleucine 40, aspartate 42, aspartate 95, alanine 96, aspartate 97, arginine 124, valine 160, arginine 211, and lysine 217 each contribute to the GDP-alpha-D-mannose site. Mg(2+) is bound at residue aspartate 97. Aspartate 97 contacts Mn(2+).

Belongs to the glycosyltransferase 2 family. Component of the dolichol-phosphate mannose (DPM) synthase complex composed of dpm1, dpm2 and dpm3. The cofactor is Mg(2+). It depends on Mn(2+) as a cofactor. Requires Ca(2+) as cofactor.

The protein localises to the endoplasmic reticulum. The enzyme catalyses a di-trans,poly-cis-dolichyl phosphate + GDP-alpha-D-mannose = a di-trans,poly-cis-dolichyl beta-D-mannosyl phosphate + GDP. It participates in protein modification; protein glycosylation. In terms of biological role, transfers mannose from GDP-mannose to dolichol monophosphate to form dolichol phosphate mannose (Dol-P-Man) which is the mannosyl donor in pathways leading to N-glycosylation, glycosyl phosphatidylinositol membrane anchoring, and O-mannosylation of proteins. The polypeptide is Dolichol-phosphate mannosyltransferase (Schizosaccharomyces pombe (strain 972 / ATCC 24843) (Fission yeast)).